Reading from the N-terminus, the 369-residue chain is MRSPLLAPSEKCQAWPRFTPPWYLSSGLAMTLYTAFVANQRCLNSARTREPEYISQVMTGSQGVPLHVWRSPIPSQAKGTLIATYGITGSLEDQGFLRQWGRWAYERHYDVILFDWRAHGKTAELSPTLTSDGLYEGEDFVYLAAQAKALGYPGPFWFGGYSLGGQLSLWGVYKGQTLADWGNNDAMLTSFSPTDIGGAMAICPSLDSQRSLNYLTSHPVGRYLEKAIANKLKELAWQLHRHHPGEFDSQAIERANTIWGFDHNLVIDRLGLASVEDYYEVSSALPLLSKIVKPTLLLYAADDPMFHPAIVEELPGLQNQLTGVDLQITPKGGHVGYIANGPCQQASNDPDENWAIHRTLDWLDQKSLA.

Catalysis depends on charge relay system residues Ser-162, Asp-303, and His-334.

It belongs to the AB hydrolase superfamily. AB hydrolase 4 family.

The protein is Putative esterase slr0264 of Synechocystis sp. (strain ATCC 27184 / PCC 6803 / Kazusa).